The primary structure comprises 618 residues: UvrABC system protein C (618 aa).

The region spanning 13 to 92 (DKPGVYLMKN…IKKYRPKYNI (80 aa)) is the GIY-YIG domain. In terms of domain architecture, UVR spans 204-239 (LDIVENFKLNMEKAAGNLEFEKAAMLRDKINIIEKI).

It belongs to the UvrC family. Interacts with UvrB in an incision complex.

Its subcellular location is the cytoplasm. In terms of biological role, the UvrABC repair system catalyzes the recognition and processing of DNA lesions. UvrC both incises the 5' and 3' sides of the lesion. The N-terminal half is responsible for the 3' incision and the C-terminal half is responsible for the 5' incision. The protein is UvrABC system protein C of Clostridium botulinum (strain 657 / Type Ba4).